The primary structure comprises 616 residues: Chaperone protein HscA homolog (616 aa).

This sequence belongs to the heat shock protein 70 family.

Functionally, chaperone involved in the maturation of iron-sulfur cluster-containing proteins. Has a low intrinsic ATPase activity which is markedly stimulated by HscB. The sequence is that of Chaperone protein HscA homolog from Aliivibrio fischeri (strain ATCC 700601 / ES114) (Vibrio fischeri).